A 147-amino-acid polypeptide reads, in one-letter code: uncharacterized protein (147 aa).

The ABM domain maps to 50–138 (IVVAGNIKVK…LLAKPAEIKI (89 aa)).

It belongs to the LsrG family.

This is an uncharacterized protein from Synechocystis sp. (strain ATCC 27184 / PCC 6803 / Kazusa).